The sequence spans 511 residues: 2-isopropylmalate synthase (511 aa).

The segment covering 1 to 16 (MTRKIDIFDTTLRDGE) has biased composition (basic and acidic residues). Residues 1 to 23 (MTRKIDIFDTTLRDGEQSPGASM) form a disordered region. The region spanning 5–268 (IDIFDTTLRD…HTDVVTQELT (264 aa)) is the Pyruvate carboxyltransferase domain. Positions 14, 203, 205, and 239 each coordinate Mn(2+). Residues 392-511 (ALESVQVVCG…IQTTRSKQGK (120 aa)) are regulatory domain.

The protein belongs to the alpha-IPM synthase/homocitrate synthase family. LeuA type 1 subfamily. Homodimer. Mn(2+) is required as a cofactor.

Its subcellular location is the cytoplasm. The catalysed reaction is 3-methyl-2-oxobutanoate + acetyl-CoA + H2O = (2S)-2-isopropylmalate + CoA + H(+). It functions in the pathway amino-acid biosynthesis; L-leucine biosynthesis; L-leucine from 3-methyl-2-oxobutanoate: step 1/4. In terms of biological role, catalyzes the condensation of the acetyl group of acetyl-CoA with 3-methyl-2-oxobutanoate (2-ketoisovalerate) to form 3-carboxy-3-hydroxy-4-methylpentanoate (2-isopropylmalate). The polypeptide is 2-isopropylmalate synthase (Olsenella uli (strain ATCC 49627 / DSM 7084 / CCUG 31166 / CIP 109912 / JCM 12494 / LMG 11480 / NCIMB 702895 / VPI D76D-27C) (Lactobacillus uli)).